A 660-amino-acid polypeptide reads, in one-letter code: DNA topoisomerase I, plasmid (660 aa).

The Toprim domain occupies methionine 1 to alanine 110. Mg(2+) is bound by residues glutamate 7 and aspartate 79. The Topo IA-type catalytic domain occupies aspartate 124–leucine 550. The interaction with DNA stretch occupies residues serine 158–glutamine 163. Tyrosine 287 acts as the O-(5'-phospho-DNA)-tyrosine intermediate in catalysis. 2 C4-type zinc fingers span residues cysteine 563–cysteine 589 and cysteine 613–cysteine 643.

This sequence belongs to the type IA topoisomerase family. As to quaternary structure, monomer. The cofactor is Mg(2+).

The catalysed reaction is ATP-independent breakage of single-stranded DNA, followed by passage and rejoining.. In terms of biological role, releases the supercoiling and torsional tension of DNA, which is introduced during the DNA replication and transcription, by transiently cleaving and rejoining one strand of the DNA duplex. Introduces a single-strand break via transesterification at a target site in duplex DNA. The scissile phosphodiester is attacked by the catalytic tyrosine of the enzyme, resulting in the formation of a DNA-(5'-phosphotyrosyl)-enzyme intermediate and the expulsion of a 3'-OH DNA strand. The free DNA strand then undergoes passage around the unbroken strand, thus removing DNA supercoils. Finally, in the religation step, the DNA 3'-OH attacks the covalent intermediate to expel the active-site tyrosine and restore the DNA phosphodiester backbone. In Xylella fastidiosa (strain 9a5c), this protein is DNA topoisomerase I, plasmid.